The primary structure comprises 512 residues: mRNA export factor (512 aa).

A disordered region spans residues 1-242 (MATDIDMLID…PVPERKAPSA (242 aa)). The Nuclear export signal signature appears at 5 to 17 (IDMLIDLGLDLSD). 2 positions are modified to phosphoserine; by host: Ser-16 and Ser-18. Composition is skewed to acidic residues over residues 16-28 (SDSELEEDALERD) and 36-55 (PESDSSGECSSSDEDMEDPC). Residues 104-112 (VWSRLGTRR) form an interaction with host ALYREF region. A Nuclear localization signal motif is present at residues 110-138 (TRRSASPREPHGGKVARIQPPSTKAPHPR). A Phosphoserine; by host modification is found at Ser-113. A compositionally biased stretch (basic residues) spans 135-149 (PHPRGGRRGRRRGRG). Arg-138 is subject to Dimethylated arginine; by host. Residues 138–152 (RGGRRGRRRGRGRYG) form an RGG-box region. Arg-148 carries the omega-N-methylarginine; by host modification. Residue Arg-150 is modified to Dimethylated arginine; by host. Basic and acidic residues predominate over residues 228 to 240 (ADGRAPVPERKAP). Zn(2+) contacts are provided by Cys-400, His-479, Cys-483, and Cys-488. A CHC2-type zinc finger spans residues 400-488 (CYLKARGLCG…HRQECSSRVC (89 aa)).

This sequence belongs to the HHV-1 ICP27 protein family. In terms of assembly, interacts with host RBP1; this interaction facilitates the RNA polymerase recruitment to viral transcription sites. Interacts (via the RGG box) with host ALYREF/THOC4; this interaction recruits ALYREF to viral replication compartments and probably directs viral mRNA to the TAP/NFX1 pathway. Interacts (via the RGG box) with host SRPK1; this interaction relocalizes SRPK1 to the nucleus and seems to alter its activity. Interacts with ICP4; this interaction modulates ICP4 DNA-binding activity. Interacts with host NXF1; this interaction allows efficient export of HSV-1 early and late transcripts. Interacts with host IRF3; this interaction inhibits IRF3 phosphorylation and nuclear translocation. Post-translationally, methylated within the RGG box possibly by host PRMT1. When hypomethylated, ICP27 is exported to the cytoplasm earlier and more rapidly. In terms of processing, phosphorylated.

It is found in the host cytoplasm. Its subcellular location is the host nucleus. Functionally, multifunctional regulator of the expression of viral genes that contributes to the shutoff of host protein synthesis and mediates nuclear export of viral intronless mRNAs. Also stimulates translation of viral transcripts. Independently, plays a role in the regulation of virion release. Also plays a role in the inhibition of host innate immune response by targeting host IRF3 and thereby preventing production of beta-interferon. Silences the 3' splice site of the host promyelocytic leukemia (PML) intron 7a, thereby switching PML isoforms from PML-II to PML-V. This could be linked to the accelerated mRNA export induced by ICP27 which might not provide sufficient time for PML pre-mRNA to be spliced in the nucleus. Also suppresses splicing of the viral ICP34.5 mRNA, allowing the virus to express a variant form of ICP34.5. The sequence is that of mRNA export factor from Human herpesvirus 2 (strain HG52) (HHV-2).